The sequence spans 275 residues: LexA repressor (275 aa).

The interval 1–50 (MKRSTPRPARSQAALTTSSEESPDRVERGGDGVATVTDFPDGPPDETGLT) is disordered. The H-T-H motif DNA-binding region spans 73–93 (MREIGEAVGLTSTSSVAHQLM). A disordered region spans residues 114–151 (RSAESAVPDASAGHSPAADRAPSARRPPRGPSPIDSNP). Active-site for autocatalytic cleavage activity residues include S199 and K236.

This sequence belongs to the peptidase S24 family. Homodimer.

The catalysed reaction is Hydrolysis of Ala-|-Gly bond in repressor LexA.. Functionally, represses a number of genes involved in the response to DNA damage (SOS response), including recA and lexA. In the presence of single-stranded DNA, RecA interacts with LexA causing an autocatalytic cleavage which disrupts the DNA-binding part of LexA, leading to derepression of the SOS regulon and eventually DNA repair. This is LexA repressor from Acidothermus cellulolyticus (strain ATCC 43068 / DSM 8971 / 11B).